The chain runs to 210 residues: Thymidylate kinase (210 aa).

9 to 16 is a binding site for ATP; it reads GLEGAGKS.

The protein belongs to the thymidylate kinase family.

The catalysed reaction is dTMP + ATP = dTDP + ADP. In terms of biological role, phosphorylation of dTMP to form dTDP in both de novo and salvage pathways of dTTP synthesis. This Aliivibrio fischeri (strain MJ11) (Vibrio fischeri) protein is Thymidylate kinase.